Consider the following 245-residue polypeptide: Orotidine 5'-phosphate decarboxylase (245 aa).

Substrate-binding positions include D22, K44, 71–80, T131, R192, Q201, G221, and R222; that span reads DLKFHDIPNT. K73 serves as the catalytic Proton donor.

Belongs to the OMP decarboxylase family. Type 1 subfamily. Homodimer.

It carries out the reaction orotidine 5'-phosphate + H(+) = UMP + CO2. The protein operates within pyrimidine metabolism; UMP biosynthesis via de novo pathway; UMP from orotate: step 2/2. Its function is as follows. Catalyzes the decarboxylation of orotidine 5'-monophosphate (OMP) to uridine 5'-monophosphate (UMP). The sequence is that of Orotidine 5'-phosphate decarboxylase from Escherichia coli O157:H7.